Here is a 397-residue protein sequence, read N- to C-terminus: uncharacterized protein (397 aa).

4 helical membrane-spanning segments follow: residues 22–42, 270–290, 327–347, and 362–382; these read ILTM…VAVG, IMTT…GIGV, VVLT…GAAL, and VVCG…MLPA.

It belongs to the ABC-4 integral membrane protein family. As to quaternary structure, part of a complex composed of YknX, YknY and YknZ. The complex interacts with YknW.

The protein resides in the cell membrane. It localises to the membrane raft. Part of an unusual four-component transporter, which is required for protection against the killing factor SdpC (sporulation-delaying protein). This is an uncharacterized protein from Bacillus subtilis (strain 168).